A 143-amino-acid polypeptide reads, in one-letter code: Large ribosomal subunit protein bL17 (143 aa).

Over residues glycine 124–alanine 133 the composition is skewed to basic and acidic residues. The segment at glycine 124–alanine 143 is disordered.

Belongs to the bacterial ribosomal protein bL17 family. As to quaternary structure, part of the 50S ribosomal subunit. Contacts protein L32.

The protein is Large ribosomal subunit protein bL17 of Mesorhizobium japonicum (strain LMG 29417 / CECT 9101 / MAFF 303099) (Mesorhizobium loti (strain MAFF 303099)).